Consider the following 191-residue polypeptide: Cytochrome c oxidase assembly protein CtaG (191 aa).

Over 1 to 9 (MSLSPHQKT) the chain is Cytoplasmic. A helical; Signal-anchor for type II membrane protein transmembrane segment spans residues 10–30 (AGGLVLVVAVMGAASFAAVPF). At 31–191 (YNWFCRVTGF…LAAESATDVN (161 aa)) the chain is on the periplasmic side.

The protein belongs to the COX11/CtaG family.

The protein resides in the cell inner membrane. In terms of biological role, exerts its effect at some terminal stage of cytochrome c oxidase synthesis, probably by being involved in the insertion of the copper B into subunit I. The polypeptide is Cytochrome c oxidase assembly protein CtaG (Cereibacter sphaeroides (strain ATCC 17029 / ATH 2.4.9) (Rhodobacter sphaeroides)).